The primary structure comprises 343 residues: Protein RecA (343 aa).

66–73 lines the ATP pocket; sequence GPESSGKT.

The protein belongs to the RecA family.

It is found in the cytoplasm. Functionally, can catalyze the hydrolysis of ATP in the presence of single-stranded DNA, the ATP-dependent uptake of single-stranded DNA by duplex DNA, and the ATP-dependent hybridization of homologous single-stranded DNAs. It interacts with LexA causing its activation and leading to its autocatalytic cleavage. The chain is Protein RecA from Rickettsia canadensis (strain McKiel).